Reading from the N-terminus, the 514-residue chain is Ferrochelatase-2, chloroplastic (514 aa).

This sequence belongs to the ferrochelatase family.

The protein resides in the plastid. It is found in the chloroplast. The enzyme catalyses heme b + 2 H(+) = protoporphyrin IX + Fe(2+). It participates in porphyrin-containing compound metabolism; protoheme biosynthesis; protoheme from protoporphyrin-IX: step 1/1. In terms of biological role, catalyzes the ferrous insertion into protoporphyrin IX. The chain is Ferrochelatase-2, chloroplastic (HEMH) from Cucumis sativus (Cucumber).